Consider the following 65-residue polypeptide: Small ribosomal subunit protein eS27 (65 aa).

Zn(2+)-binding residues include Cys20, Cys23, Cys39, and Cys42. The segment at 20–42 adopts a C4-type zinc-finger fold; it reads CIDCGNEQIVFSHPATRVRCLVC.

This sequence belongs to the eukaryotic ribosomal protein eS27 family. In terms of assembly, part of the 30S ribosomal subunit. It depends on Zn(2+) as a cofactor.

This chain is Small ribosomal subunit protein eS27, found in Pyrococcus horikoshii (strain ATCC 700860 / DSM 12428 / JCM 9974 / NBRC 100139 / OT-3).